The sequence spans 235 residues: Vacuolar protein sorting-associated protein 60.2 (235 aa).

A disordered region spans residues 1–30 (MKRIFGAKNNKEPPPSIQDASDRINKRGDS). Residues 20–30 (ASDRINKRGDS) are compositionally biased toward basic and acidic residues. The stretch at 99–148 (LKDAQQTMTALKSANKELKGMMKTVKIQDIDNLQDDMMDLMDESSEIQET) forms a coiled coil. Positions 174 to 235 (DMGNETEADG…PAVPRASLRG (62 aa)) are disordered.

This sequence belongs to the SNF7 family.

It is found in the endosome. The protein resides in the multivesicular body membrane. In terms of biological role, probable peripherally associated component of the endosomal sorting required for transport complex III (ESCRT-III) which is involved in multivesicular bodies (MVBs) formation and sorting of endosomal cargo proteins into MVBs. In Arabidopsis thaliana (Mouse-ear cress), this protein is Vacuolar protein sorting-associated protein 60.2.